Here is a 270-residue protein sequence, read N- to C-terminus: Interleukin-1 alpha (270 aa).

Residues 1-112 (MAKVPDLFED…EVEEEIMKPR (112 aa)) constitute a propeptide that is removed on maturation. At Lys82 the chain carries N6-acetyllysine. Residues 82–86 (KKRRL) form a nuclear localization signal (NLS) region. Phosphoserine is present on Ser87. N-linked (GlcNAc...) asparagine glycosylation is present at Asn139.

Belongs to the IL-1 family. As to quaternary structure, monomer. Interacts with TMED10; the interaction mediates the translocation from the cytoplasm into the ERGIC (endoplasmic reticulum-Golgi intermediate compartment) and thereby secretion. Interacts with IL1R1. Interacts with S100A13; this interaction is the first step in the export of IL1A, followed by direct translocation of this complex across the plasma membrane. Acetylated within its nuclear localization sequence, which impacts subcellular localization. Post-translationally, proteolytic processed by CAPN1 in a calcium-dependent manner. Cleavage from 31 kDa precursor to 18 kDa biologically active molecules. In terms of processing, phosphorylated. Phosphorylation greatly enhances susceptibility to digestion and promotes the conversion of pre-IL1A alpha to the biologically active IL1A.

It is found in the nucleus. The protein resides in the cytoplasm. The protein localises to the secreted. Functionally, cytokine constitutively present intracellularly in nearly all resting non-hematopoietic cells that plays an important role in inflammation and bridges the innate and adaptive immune systems. After binding to its receptor IL1R1 together with its accessory protein IL1RAP, forms the high affinity interleukin-1 receptor complex. Signaling involves the recruitment of adapter molecules such as MYD88, IRAK1 or IRAK4. In turn, mediates the activation of NF-kappa-B and the three MAPK pathways p38, p42/p44 and JNK pathways. Within the cell, acts as an alarmin and cell death results in its liberation in the extracellular space after disruption of the cell membrane to induce inflammation and alert the host to injury or damage. In addition to its role as a danger signal, which occurs when the cytokine is passively released by cell necrosis, directly senses DNA damage and acts as signal for genotoxic stress without loss of cell integrity. This Felis catus (Cat) protein is Interleukin-1 alpha (IL1A).